Consider the following 101-residue polypeptide: Small ribosomal subunit protein uS14 (101 aa).

The protein belongs to the universal ribosomal protein uS14 family. As to quaternary structure, part of the 30S ribosomal subunit. Contacts proteins S3 and S10.

In terms of biological role, binds 16S rRNA, required for the assembly of 30S particles and may also be responsible for determining the conformation of the 16S rRNA at the A site. This chain is Small ribosomal subunit protein uS14, found in Ectopseudomonas mendocina (strain ymp) (Pseudomonas mendocina).